Reading from the N-terminus, the 404-residue chain is Glucose-1-phosphate adenylyltransferase (404 aa).

Alpha-D-glucose 1-phosphate contacts are provided by residues Tyr-99, Gly-164, 179 to 180, and Ser-197; that span reads EK.

This sequence belongs to the bacterial/plant glucose-1-phosphate adenylyltransferase family. In terms of assembly, homotetramer.

It carries out the reaction alpha-D-glucose 1-phosphate + ATP + H(+) = ADP-alpha-D-glucose + diphosphate. It participates in glycan biosynthesis; glycogen biosynthesis. Its function is as follows. Involved in the biosynthesis of ADP-glucose, a building block required for the elongation reactions to produce glycogen. Catalyzes the reaction between ATP and alpha-D-glucose 1-phosphate (G1P) to produce pyrophosphate and ADP-Glc. This Nocardia farcinica (strain IFM 10152) protein is Glucose-1-phosphate adenylyltransferase.